The primary structure comprises 601 residues: MAGSDLLLAGVLFLFAAVIAVPLASRLGIGAVLGYLLAGIAIGPWGLGFISDVDEILHFSELGVVFLMFIIGLELNPAKLWRLRSSIFGVGAAQVMLSAAILGGLLMTTGFSWQAAVVGGIGLAMSSTAMALQLMREKGMSRSESGQLGFSVLLFQDLAVIPALALVPLLAGSADEHVNWLTVGMKVLAFAGMLIGGRYLLRPVFRFIASSGVREVFTAATLLLVLGSALFMEALGLSMALGTFIAGVLLAESEYRHELEIAIDPFKGLLLGLFFISVGMALNLGVLYTHLLWVAVSVAVLVAVKMLVLYLLARLYGLRSSERMQFAGVLSQGGEFAFVLFSLPASQRLFQHDQMALLLVAVTLSMMTTPLLMKGIDKLLSRRLNPADDTDEAPWVEDDKPQVIIVGFGRFGQVIGRLLMANKMRITVLERDISAVNLMRNYGYKVYFGDATQLELLRSAGAEEAQSIVITCNEPEDTMRLVEMCQQHFPHLHILARARGRVEAHELLQAGVTQFSRETFSSALELGRKALITLGMHPHQAQRAQLHFRRLDMRMLRELMPVHTDTVQVSRVREARRELEEIFQREMQKESRQLDGWDEFE.

13 helical membrane passes run 4–24 (SDLLLAGVLFLFAAVIAVPLA), 29–49 (IGAVLGYLLAGIAIGPWGLGF), 55–75 (EILHFSELGVVFLMFIIGLEL), 87–107 (IFGVGAAQVMLSAAILGGLLM), 115–135 (AAVVGGIGLAMSSTAMALQLM), 152–172 (VLLFQDLAVIPALALVPLLAG), 177–197 (HVNWLTVGMKVLAFAGMLIGG), 207–227 (FIASSGVREVFTAATLLLVLG), 230–250 (LFMEALGLSMALGTFIAGVLL), 268–288 (GLLLGLFFISVGMALNLGVLY), 291–311 (LLWVAVSVAVLVAVKMLVLYL), 326–346 (FAGVLSQGGEFAFVLFSLPAS), and 356–376 (ALLLVAVTLSMMTTPLLMKGI). In terms of domain architecture, RCK N-terminal spans 400-519 (KPQVIIVGFG…AGVTQFSRET (120 aa)).

It belongs to the monovalent cation:proton antiporter 2 (CPA2) transporter (TC 2.A.37) family. KefB subfamily. In terms of assembly, interacts with the regulatory subunit KefG.

It localises to the cell inner membrane. Its function is as follows. Pore-forming subunit of a potassium efflux system that confers protection against electrophiles. Catalyzes K(+)/H(+) antiport. The polypeptide is Glutathione-regulated potassium-efflux system protein KefB (Klebsiella pneumoniae (strain 342)).